We begin with the raw amino-acid sequence, 162 residues long: Thy-1 membrane glycoprotein (162 aa).

An N-terminal signal peptide occupies residues methionine 1 to glycine 19. Residue glutamine 20 is modified to Pyrrolidone carboxylic acid. One can recognise an Ig-like V-type domain in the interval glutamine 20–lysine 127. 2 cysteine pairs are disulfide-bonded: cysteine 28-cysteine 131 and cysteine 38-cysteine 105. N-linked (GlcNAc...) asparagine glycosylation is found at asparagine 42, asparagine 94, and asparagine 118. Residue cysteine 131 is the site of GPI-anchor amidated cysteine; alternate attachment. Residues glycine 132–leucine 162 constitute a propeptide, removed in mature form.

It is found in the cell membrane. In terms of biological role, may play a role in cell-cell or cell-ligand interactions during synaptogenesis and other events in the brain. The chain is Thy-1 membrane glycoprotein (Thy1) from Mus musculus (Mouse).